The following is a 580-amino-acid chain: Tricyclene synthase TPS4, chloroplastic (580 aa).

The N-terminal 41 residues, 1–41 (MLLNSSFISLPSFFKSQELGRTNLLIHRNGSPLLCYATNTN), are a transit peptide targeting the chloroplast. Residues arginine 296, aspartate 334, aspartate 338, arginine 475, and asparagine 478 each contribute to the (2E)-geranyl diphosphate site. Mg(2+) is bound by residues aspartate 334 and aspartate 338. Positions 334 to 338 (DDIYD) match the DDXXD motif motif. The Mg(2+) site is built by asparagine 478, threonine 482, and glutamate 486.

It belongs to the terpene synthase family. Tpsb subfamily. The cofactor is Mg(2+). Requires Mn(2+) as cofactor. In terms of tissue distribution, expressed in leaves.

The protein resides in the plastid. It is found in the chloroplast stroma. The enzyme catalyses (2E)-geranyl diphosphate = tricyclene + diphosphate. It carries out the reaction (2E)-geranyl diphosphate = (E)-beta-ocimene + diphosphate. It functions in the pathway secondary metabolite biosynthesis; terpenoid biosynthesis. Functionally, promotes the emission of terpenes volatile organic compounds (VOC) in response to damage mediated by arthropod herbivores (e.g. Spodoptera exigua), probably to attract natural enemies of the herbivores. The polypeptide is Tricyclene synthase TPS4, chloroplastic (TPS4) (Medicago truncatula (Barrel medic)).